A 464-amino-acid polypeptide reads, in one-letter code: Clusterin-like protein 1 (464 aa).

The first 20 residues, 1-20 (MQPPLFVISVYLLWLKYCDS), serve as a signal peptide directing secretion. Positions 56-109 (IKQMKIMMERREEEHAKLMKALKKCKEEKQEAQKLMNEVQERLEEEEKLCQASS) form a coiled coil. 5 cysteine pairs are disulfide-bonded: Cys-105–Cys-331, Cys-116–Cys-323, Cys-119–Cys-320, Cys-124–Cys-313, and Cys-131–Cys-303. Asn-195, Asn-255, Asn-309, Asn-349, Asn-398, and Asn-429 each carry an N-linked (GlcNAc...) asparagine glycan.

The protein belongs to the clusterin family.

The protein resides in the secreted. The polypeptide is Clusterin-like protein 1 (Rattus norvegicus (Rat)).